The following is a 53-amino-acid chain: Large ribosomal subunit protein eL40 (53 aa).

This sequence belongs to the eukaryotic ribosomal protein eL40 family.

The sequence is that of Large ribosomal subunit protein eL40 from Pyrobaculum arsenaticum (strain DSM 13514 / JCM 11321 / PZ6).